A 205-amino-acid chain; its full sequence is SCO2-like protein RP587 (205 aa).

3 residues coordinate Cu cation: C82, C86, and H172.

The protein belongs to the SCO1/2 family.

In Rickettsia prowazekii (strain Madrid E), this protein is SCO2-like protein RP587.